The primary structure comprises 977 residues: uncharacterized protein (977 aa).

Positions 1 to 24 (MQSNLLKVLGVLAIVATLVCFIFA) are cleaved as a signal peptide. The interval 125–146 (TESTRPGKSNLDDKGNMIPIPR) is disordered. A run of 6 helical transmembrane segments spans residues 612–632 (IKAI…LGFA), 722–742 (LGLS…IVII), 754–774 (AFMA…FLLF), 796–816 (VVMM…LDFV), 833–853 (FIGT…INWF), and 866–886 (GVNM…YGYV). Positions 918–977 (KALSPIGMDDKTRQGITGRAEARLKQRNKTLDQAEKNRKNTPKEGGEKTNAEPPQPEARG) are disordered. A compositionally biased stretch (basic and acidic residues) spans 937–967 (AEARLKQRNKTLDQAEKNRKNTPKEGGEKTN).

The protein belongs to the TrbL/VirB6 family.

The protein resides in the cell membrane. This is an uncharacterized protein from Rickettsia felis (strain ATCC VR-1525 / URRWXCal2) (Rickettsia azadi).